Reading from the N-terminus, the 289-residue chain is 33 kDa chaperonin (289 aa).

2 cysteine pairs are disulfide-bonded: cysteine 229–cysteine 231 and cysteine 262–cysteine 265.

It belongs to the HSP33 family. Post-translationally, under oxidizing conditions two disulfide bonds are formed involving the reactive cysteines. Under reducing conditions zinc is bound to the reactive cysteines and the protein is inactive.

It is found in the cytoplasm. In terms of biological role, redox regulated molecular chaperone. Protects both thermally unfolding and oxidatively damaged proteins from irreversible aggregation. Plays an important role in the bacterial defense system toward oxidative stress. This is 33 kDa chaperonin from Pectobacterium carotovorum subsp. carotovorum (strain PC1).